Here is a 413-residue protein sequence, read N- to C-terminus: Alpha-1-antitrypsin 1-1 (413 aa).

The signal sequence occupies residues 1–24 (MTPSISWGLLLLAGLCCLVPSFLA). 3 N-linked (GlcNAc...) asparagine glycosylation sites follow: Asn64, Asn101, and Asn265. Residues 368–387 (AVTVLQMVPMSMPPILRFDH) form an RCL region.

Belongs to the serpin family.

The protein localises to the secreted. Inhibitor of serine proteases. Its primary target is elastase, but it also has a moderate affinity for plasmin and thrombin. The sequence is that of Alpha-1-antitrypsin 1-1 (Serpina1a) from Mus musculus (Mouse).